A 91-amino-acid chain; its full sequence is Small ribosomal subunit protein uS15 (91 aa).

Belongs to the universal ribosomal protein uS15 family. Part of the 30S ribosomal subunit. Forms a bridge to the 50S subunit in the 70S ribosome, contacting the 23S rRNA.

One of the primary rRNA binding proteins, it binds directly to 16S rRNA where it helps nucleate assembly of the platform of the 30S subunit by binding and bridging several RNA helices of the 16S rRNA. Its function is as follows. Forms an intersubunit bridge (bridge B4) with the 23S rRNA of the 50S subunit in the ribosome. The sequence is that of Small ribosomal subunit protein uS15 from Amoebophilus asiaticus (strain 5a2).